We begin with the raw amino-acid sequence, 120 residues long: SPbeta prophage-derived uncharacterized protein YosG (120 aa).

This Bacillus subtilis (strain 168) protein is SPbeta prophage-derived uncharacterized protein YosG (yosG).